Here is a 579-residue protein sequence, read N- to C-terminus: MAQISKCSSLSTELNESSIISHHHGNLWDDDFIQSLKSSNGAPQYHERAEKLVEEIKNLVVSEMKDCNDDLIRHLQMVDIFECLGIDRHFQNEIQVALDYVYRYWNELEGIGIGSRDSLIKDFNATALGFRALRLHRYNVSSDVLENFKNENGQFFCSSTVEEKEVRCMLTLFRASEISFPGEKVMDEAKAFTTEYLTKVLTGVDVTDVDQSLLREVKYALEFPWHCSLPRWEARNFIEICGQNDSWLKSIMNKRVLELAKLDFNILQCAHHRELQLLSRCWWSQSDIAQQNFYRKRHVEFYFWVVIGTFEPEFSTCRITFAKIATLMTILDDLYDTHGTLEQLKIFTEGVKRWDLSLVDSLPDYIKITFEFFLNTSNELIAEVAKTQERDMSAYIRKTWERYLEAYMQEAEWITAGHVPTFDEYMKNGISSSGMCILNLYSLLLMGQLLPDDVLEQIHSPSKIHELVELTARLVDDSKDFETNKVGGELASGIECYVKDNPECTLEDASNHLNGLLDLTVKELNWEFVRHDSVALCFKKFAFNVARGLRLIYKYRDGFDVSNQEMKTHIFKILIDPLT.

Positions 332, 336, 476, and 484 each coordinate Mg(2+). The short motif at 332–336 is the DDXXD motif element; the sequence is DDLYD.

The protein belongs to the terpene synthase family. Tpsd subfamily. Mg(2+) serves as cofactor. It depends on Mn(2+) as a cofactor.

It catalyses the reaction (2E,6E)-farnesyl diphosphate = alpha-longipinene + diphosphate. It functions in the pathway sesquiterpene biosynthesis. The protein operates within terpene metabolism; oleoresin biosynthesis. Its function is as follows. Terpene synthase (TPS) involved in the biosynthesis of sesquiterpene natural products included in conifer oleoresin secretions and volatile emissions; these compounds contribute to biotic and abiotic stress defense against herbivores and pathogens. Catalyzes the conversion of (2E,6E)-farnesyl diphosphate (FPP) to alpha-longipinene. This is Alpha-longipinene synthase from Picea sitchensis (Sitka spruce).